The primary structure comprises 573 residues: Proline--tRNA ligase (573 aa).

Belongs to the class-II aminoacyl-tRNA synthetase family. ProS type 1 subfamily. Homodimer.

The protein localises to the cytoplasm. The enzyme catalyses tRNA(Pro) + L-proline + ATP = L-prolyl-tRNA(Pro) + AMP + diphosphate. Its function is as follows. Catalyzes the attachment of proline to tRNA(Pro) in a two-step reaction: proline is first activated by ATP to form Pro-AMP and then transferred to the acceptor end of tRNA(Pro). As ProRS can inadvertently accommodate and process non-cognate amino acids such as alanine and cysteine, to avoid such errors it has two additional distinct editing activities against alanine. One activity is designated as 'pretransfer' editing and involves the tRNA(Pro)-independent hydrolysis of activated Ala-AMP. The other activity is designated 'posttransfer' editing and involves deacylation of mischarged Ala-tRNA(Pro). The misacylated Cys-tRNA(Pro) is not edited by ProRS. The protein is Proline--tRNA ligase of Cupriavidus necator (strain ATCC 17699 / DSM 428 / KCTC 22496 / NCIMB 10442 / H16 / Stanier 337) (Ralstonia eutropha).